The primary structure comprises 212 residues: 3-oxo-tetronate 4-phosphate decarboxylase (212 aa).

E79 acts as the Proton acceptor in catalysis. Zn(2+) contacts are provided by E79, H98, and H100. The active-site Proton donor is the Y125. Position 165 (H165) interacts with Zn(2+).

Belongs to the aldolase class II family. AraD/FucA subfamily. Zn(2+) is required as a cofactor.

The catalysed reaction is 3-dehydro-4-O-phospho-D-erythronate + H(+) = dihydroxyacetone phosphate + CO2. It catalyses the reaction 3-dehydro-4-O-phospho-L-erythronate + H(+) = dihydroxyacetone phosphate + CO2. Its function is as follows. Catalyzes the decarboxylation of 3-oxo-tetronate 4-phosphate to dihydroxyacetone phosphate (DHAP) and CO(2). In Escherichia coli O6:H1 (strain CFT073 / ATCC 700928 / UPEC), this protein is 3-oxo-tetronate 4-phosphate decarboxylase.